The primary structure comprises 443 residues: MSHASRPTPLEARGSTPLTGRVRVPGDKSISHRALILGALAVGETKITGLLEGEDVLNTAKAMAALGAKVERVGEGAWRVHGVGVGGFRAPDAPLDFGNSGTGCRLAMGAVAGSPIAATFDGDASLRSRPMRRILDPLELMGAKVSGGDGARLPLTLEGARDPIPMVYRTPVASAQIKSAVLLAGLSAPGETTVIEAEASRDHTERMLAQFGADIVTEPEGTHGRRITLTGQPELHGADVVVPADPSSAAFPIVAALIVPGSDLTLTDVMTNPLRTGLFTTLREMGASIEESDVRDAGEPMANLRVRASKLRGVTVPPERAPAMIDEYLVLAVAAAFAEGTTRMLGLKELRVKESDRLEATADMLRVNGVKVEIVGDDLIVHGEGRVPGGGTVATHMDHRIAMSALVMGCASDTPVKVDDTAFIATSFPDFIPMMRGLGADFV.

A disordered region spans residues 1 to 22 (MSHASRPTPLEARGSTPLTGRV). K28, S29, and R33 together coordinate 3-phosphoshikimate. K28 serves as a coordination point for phosphoenolpyruvate. G101 and R129 together coordinate phosphoenolpyruvate. S174, Q176, D326, and K353 together coordinate 3-phosphoshikimate. Q176 lines the phosphoenolpyruvate pocket. D326 acts as the Proton acceptor in catalysis. Phosphoenolpyruvate is bound by residues R357 and R400.

The protein belongs to the EPSP synthase family. In terms of assembly, monomer.

It localises to the cytoplasm. It carries out the reaction 3-phosphoshikimate + phosphoenolpyruvate = 5-O-(1-carboxyvinyl)-3-phosphoshikimate + phosphate. It participates in metabolic intermediate biosynthesis; chorismate biosynthesis; chorismate from D-erythrose 4-phosphate and phosphoenolpyruvate: step 6/7. Functionally, catalyzes the transfer of the enolpyruvyl moiety of phosphoenolpyruvate (PEP) to the 5-hydroxyl of shikimate-3-phosphate (S3P) to produce enolpyruvyl shikimate-3-phosphate and inorganic phosphate. The polypeptide is 3-phosphoshikimate 1-carboxyvinyltransferase (Afipia carboxidovorans (strain ATCC 49405 / DSM 1227 / KCTC 32145 / OM5) (Oligotropha carboxidovorans)).